The following is a 472-amino-acid chain: Divinyl ether synthase CYP74 (472 aa).

Cys-425 serves as a coordination point for heme.

This sequence belongs to the cytochrome P450 family. The cofactor is heme. Expressed mainly in bulbs, and at lower levels in roots.

The enzyme catalyses (13S)-hydroperoxy-(9Z,11E)-octadecadienoate = etheroleate + H2O. It carries out the reaction (13S)-hydroperoxy-(9Z,11E,15Z)-octadecatrienoate = etherolenate + H2O. It catalyses the reaction (9S)-hydroperoxy-(10E,12Z)-octadecadienoate = colneleate + H2O. The catalysed reaction is (9S)-hydroperoxy-(10E,12Z,15Z)-octadecatrienoate = colnelenate + H2O. It functions in the pathway lipid metabolism; oxylipin biosynthesis. Its function is as follows. Divinyl ether synthase involved in oxylipin biosynthesis. Catalyzes the conversion of (13S)-hydroperoxy-(9Z,11E)-octadecadienoate (13-HPOD) to etheroleate and (13S)-hydroperoxy-(9Z,11E,15Z)-octadecatrienoate (13-HPOT) to etherolenate. Catalyzes the conversion of (9S)-hydroperoxy-(10E,12Z)-octadecadienoate (9-HPOD) to colneleate and (9S)-hydroperoxy-(10E,12Z,15Z)-octadecatrienoate (9-HPOT) colnelenate. The sequence is that of Divinyl ether synthase CYP74 from Allium sativum (Garlic).